The primary structure comprises 309 residues: Ribonuclease Z (309 aa).

Residues His-63, His-65, Asp-67, His-68, His-145, Asp-216, and His-274 each contribute to the Zn(2+) site. The active-site Proton acceptor is the Asp-67.

It belongs to the RNase Z family. In terms of assembly, homodimer. Requires Zn(2+) as cofactor.

The enzyme catalyses Endonucleolytic cleavage of RNA, removing extra 3' nucleotides from tRNA precursor, generating 3' termini of tRNAs. A 3'-hydroxy group is left at the tRNA terminus and a 5'-phosphoryl group is left at the trailer molecule.. Zinc phosphodiesterase, which displays some tRNA 3'-processing endonuclease activity. Probably involved in tRNA maturation, by removing a 3'-trailer from precursor tRNA. This chain is Ribonuclease Z, found in Streptococcus pyogenes serotype M1.